The sequence spans 249 residues: uncharacterized protein (249 aa).

2 consecutive transmembrane segments (helical) span residues 49 to 69 (ILLS…CYLL) and 223 to 243 (IVMS…VHHL).

It is found in the cell membrane. This is an uncharacterized protein from Bacillus anthracis.